Here is a 489-residue protein sequence, read N- to C-terminus: UDP-N-acetylmuramate--L-alanine ligase (489 aa).

130-136 (GTHGKTS) is an ATP binding site.

The protein belongs to the MurCDEF family.

The protein resides in the cytoplasm. The enzyme catalyses UDP-N-acetyl-alpha-D-muramate + L-alanine + ATP = UDP-N-acetyl-alpha-D-muramoyl-L-alanine + ADP + phosphate + H(+). It participates in cell wall biogenesis; peptidoglycan biosynthesis. Cell wall formation. The chain is UDP-N-acetylmuramate--L-alanine ligase from Corynebacterium efficiens (strain DSM 44549 / YS-314 / AJ 12310 / JCM 11189 / NBRC 100395).